We begin with the raw amino-acid sequence, 588 residues long: Mitochondrial tRNA methylthiotransferase CDK5RAP1 (588 aa).

The transit peptide at 1 to 30 directs the protein to the mitochondrion; sequence MHPLRCVLQVQRLSAPFTSMCWVLLRTCRA. 2 disordered regions span residues 33–53 and 70–91; these read SVSSTPCPSPEAKSSEAQKDF and ASVPQEKPSSPEVEDPPPYLSG. The MTTase N-terminal domain maps to 99–219; it reads RKVYLETYGC…LPRLLAVVES (121 aa). [4Fe-4S] cluster-binding residues include Cys-108, Cys-144, Cys-182, Cys-257, Cys-261, and Cys-264. Positions 243-498 constitute a Radical SAM core domain; it reads SPSATSAFVS…TVFREEASKA (256 aa). A TRAM domain is found at 500-575; the sequence is KTSVGCSQLV…SQTLKGHILC (76 aa).

The protein belongs to the methylthiotransferase family. MiaB subfamily. In terms of assembly, interacts with CDK5R1 (p35 form). CDK5RAP1, CDK5RAP2 and CDK5RAP3 show competitive binding to CDK5R1. Probably forms a complex with CDK5R1 and CDK5. [4Fe-4S] cluster is required as a cofactor. Expressed in brain, liver, skeletal muscle and heart.

It is found in the mitochondrion. It catalyses the reaction N(6)-dimethylallyladenosine(37) in tRNA + (sulfur carrier)-SH + AH2 + 2 S-adenosyl-L-methionine = 2-methylsulfanyl-N(6)-dimethylallyladenosine(37) in tRNA + (sulfur carrier)-H + 5'-deoxyadenosine + L-methionine + A + S-adenosyl-L-homocysteine + 2 H(+). Its function is as follows. Methylthiotransferase that catalyzes the conversion of N6-(dimethylallyl)adenosine (i(6)A) to 2-methylthio-N6-(dimethylallyl)adenosine (ms(2)i(6)A) at position 37 (adjacent to the 3'-end of the anticodon) of four mitochondrial DNA-encoded tRNAs (Ser(UCN), Phe, Tyr and Trp). Essential for efficient and highly accurate protein translation by the ribosome. Specifically inhibits CDK5 activation by CDK5R1. Essential for efficient mitochondrial protein synthesis and respiratory chain. The chain is Mitochondrial tRNA methylthiotransferase CDK5RAP1 from Mus musculus (Mouse).